Reading from the N-terminus, the 376-residue chain is MINLIEIRRQLHQIPEIGLEEHKTQKYLLTIIHQIIQNKSFIQVETWQTGILVYLKGSQGQKTIGWRTDIDGLPVEELTNLPFASKNGRMHACGHDIHMTVALGLLEKLSESQPKNNLLFLFQPAEENEAGGKLMYDGGAFKNWLPDEFYGLHVRPDLKVGDIATNEQTLFAGTCEVELTFVGTGGHAAFPHTANDALVAAAYFVTQVQTIVSRNVDPLDSAVVTFGKMEAGTTNNIIAERAFLHGTIRSLTQEVNELTQKRLTELAKGVAQSFDMTIDLKLKQGGYLPVENNPKLAKELMDFFRNETKANLIDIAPAMTGEDFGYLLSKIPGVMFWLGINSEAPLHSQKMQADEEVLDFAVEAIGQFLDFKANRN.

D69 is a catalytic residue. E127 acts as the Proton acceptor in catalysis.

This sequence belongs to the peptidase M20A family. N-acetyldiaminopimelate deacetylase subfamily.

The enzyme catalyses N-acetyl-(2S,6S)-2,6-diaminopimelate + H2O = (2S,6S)-2,6-diaminopimelate + acetate. Its pathway is amino-acid biosynthesis; L-lysine biosynthesis via DAP pathway; LL-2,6-diaminopimelate from (S)-tetrahydrodipicolinate (acetylase route): step 3/3. In terms of biological role, catalyzes the conversion of N-acetyl-diaminopimelate to diaminopimelate and acetate. The polypeptide is N-acetyldiaminopimelate deacetylase (Lactococcus lactis subsp. cremoris (strain SK11)).